Reading from the N-terminus, the 790-residue chain is Transient receptor potential cation channel subfamily V member 3 (790 aa).

The Cytoplasmic portion of the chain corresponds to 1 to 430; sequence MKAHPKEMVP…TLEPLHTLLH (430 aa). Disordered regions lie at residues 15–34, 52–71, and 76–112; these read RVAA…PAEI, PNPT…MDSN, and ISGN…KEEQ. Residues 95–105 are compositionally biased toward polar residues; that stretch reads ETPSNPNSPSA. ANK repeat units lie at residues 117–148, 170–198, 214–243, 261–291, 298–330, 340–362, and 398–420; these read RRLK…LCRR, TCLM…EEND, EGQT…DVNA, FGET…DITS, NILH…RSGN, DGLT…YILS, and TTDN…HEML. The helical transmembrane segment at 431–460 threads the bilayer; that stretch reads MKWKKFAKHMFFLSFCFYFFYNITLTLVSY. At 461–479 the chain is on the extracellular side; sequence YRPREEEAIPHPLALTHKM. The chain crosses the membrane as a helical span at residues 480 to 508; sequence GWLQLLGRMFVLIWAMCISVKEGIAIFLL. Residues 509–519 lie on the Cytoplasmic side of the membrane; sequence RPSDLQSILSD. Residues 520–540 traverse the membrane as a helical segment; the sequence is AWFHFVFFIQAVLVILSVFLY. Residues 541–545 lie on the Extracellular side of the membrane; that stretch reads LFAYK. A helical transmembrane segment spans residues 546–566; sequence EYLACLVLAMALGWANMLYYT. Over 567 to 569 the chain is Cytoplasmic; that stretch reads RGF. A helical transmembrane segment spans residues 570–608; that stretch reads QSMGMYSVMIQKVILHDVLKFLFVYIVFLLGFGVALASL. Residues 609–620 lie on the Extracellular side of the membrane; that stretch reads IEKCPKDNKDCS. The pore-forming intramembrane region spans 621-646; the sequence is SYGSFSDAVLELFKLTIGLGDLNIQQ. Gly638 is a Na(+) binding site. Topologically, residues 647 to 649 are extracellular; that stretch reads NSK. Residues 650 to 686 traverse the membrane as a helical segment; it reads YPILFLFLLITYVILTFVLLLNMLIALMGETVENVSK. Residues 687–790 lie on the Cytoplasmic side of the membrane; it reads ESERIWRLQR…EVEEFPETSV (104 aa).

This sequence belongs to the transient receptor (TC 1.A.4) family. TrpV subfamily. TRPV3 sub-subfamily. As to quaternary structure, homotetramer. May convert from a homotetramer to a homopentamer to allow pore dilation. Interacts with TRPV1; may form a heteromeric channel with TRPV1. Interacts with SNX11; this interaction promotes TRPV3 trafficking from the cell membrane to lysosome for degradation. As to expression, abundantly expressed in CNS. Widely expressed at low levels. Detected in dorsal root ganglion (at protein level). Expressed in the keratinocyte layers of the outer root sheath and, to lesser extent, to the matrix of the hair follicles (at protein level).

The protein resides in the cell membrane. It localises to the cytoplasm. It is found in the lysosome. The enzyme catalyses Ca(2+)(in) = Ca(2+)(out). It catalyses the reaction Mg(2+)(in) = Mg(2+)(out). It carries out the reaction Na(+)(in) = Na(+)(out). The catalysed reaction is K(+)(in) = K(+)(out). With respect to regulation, activated by cannabinoid that binds to the vanilloid binding pocket. Diphenylboronic anhydride induces pore dilation and enhances cation permeability by promoting the conversion to a homopentamer. Functionally, non-selective calcium permeant cation channel. It is activated by innocuous (warm) temperatures and shows an increased response at noxious temperatures greater than 39 degrees Celsius. Activation exhibits an outward rectification. The channel pore can dilate to provide permeability to larger cations. May associate with TRPV1 and may modulate its activity. Is a negative regulator of hair growth and cycling: TRPV3-coupled signaling suppresses keratinocyte proliferation in hair follicles and induces apoptosis and premature hair follicle regression (catagen). The chain is Transient receptor potential cation channel subfamily V member 3 (TRPV3) from Homo sapiens (Human).